The following is a 387-amino-acid chain: Pepsin A-5 (387 aa).

The signal sequence occupies residues methionine 1–cysteine 15. The propeptide at leucine 16 to threonine 62 is activation peptide. The Peptidase A1 domain maps to tyrosine 74–alanine 384. The active site involves aspartate 92. Cystine bridges form between cysteine 105–cysteine 110 and cysteine 266–cysteine 270. Residue aspartate 275 is part of the active site. Cysteine 309 and cysteine 343 form a disulfide bridge.

Belongs to the peptidase A1 family. Expressed in glandular chief cells of the neonatal stomach. Expressed in yolk sacs of the placenta (at protein level).

The protein resides in the secreted. The enzyme catalyses Preferential cleavage: hydrophobic, preferably aromatic, residues in P1 and P1' positions. Cleaves 1-Phe-|-Val-2, 4-Gln-|-His-5, 13-Glu-|-Ala-14, 14-Ala-|-Leu-15, 15-Leu-|-Tyr-16, 16-Tyr-|-Leu-17, 23-Gly-|-Phe-24, 24-Phe-|-Phe-25 and 25-Phe-|-Tyr-26 bonds in the B chain of insulin.. Its activity is regulated as follows. Inhibited by pepstatin A. Shows particularly broad specificity; although bonds involving phenylalanine and leucine are preferred, many others are also cleaved to some extent. May play a role as a specialized neonatal digestive enzyme. This Mus musculus (Mouse) protein is Pepsin A-5.